Here is an 879-residue protein sequence, read N- to C-terminus: Alanine--tRNA ligase (879 aa).

Positions 566, 570, 668, and 672 each coordinate Zn(2+).

It belongs to the class-II aminoacyl-tRNA synthetase family. It depends on Zn(2+) as a cofactor.

It is found in the cytoplasm. The enzyme catalyses tRNA(Ala) + L-alanine + ATP = L-alanyl-tRNA(Ala) + AMP + diphosphate. Functionally, catalyzes the attachment of alanine to tRNA(Ala) in a two-step reaction: alanine is first activated by ATP to form Ala-AMP and then transferred to the acceptor end of tRNA(Ala). Also edits incorrectly charged Ser-tRNA(Ala) and Gly-tRNA(Ala) via its editing domain. The sequence is that of Alanine--tRNA ligase from Listeria monocytogenes serotype 4b (strain F2365).